The following is a 623-amino-acid chain: Activator of C kinase protein 1 (623 aa).

Residues 141–230 are disordered; sequence KESLGSPAVQ…GSSGGEDKLS (90 aa). Polar residues predominate over residues 152-161; sequence ASISSGNRIS. Residues 176–193 are compositionally biased toward basic and acidic residues; the sequence is SESRILQEKVYRTEEKAP. Residues Lys184 and Lys191 each participate in a glycyl lysine isopeptide (Lys-Gly) (interchain with G-Cter in ubiquitin) cross-link. A compositionally biased stretch (polar residues) spans 206 to 215; the sequence is KINQPPTGSA. Sel1-like repeat units lie at residues 318–361, 408–444, 495–531, and 576–611; these read PPAM…KLNN, SACMYKLGMSHLYGLNMQKTDVLLAIKWFDKAAQKGD, PLAQWKLGNCYEFGDLGLPVVAKKSIYWYSKAAAAQP, and ARTEFALGFYYEKGVGCEVDLDLAKQYYQRAARMGF.

The polypeptide is Activator of C kinase protein 1 (ACK1) (Saccharomyces cerevisiae (strain ATCC 204508 / S288c) (Baker's yeast)).